The primary structure comprises 523 residues: 2-isopropylmalate synthase (523 aa).

One can recognise a Pyruvate carboxyltransferase domain in the interval 5 to 267; that stretch reads VIIFDTTLRD…ETGINAKEIH (263 aa). Residues D14, H202, H204, and N238 each coordinate Mn(2+). A regulatory domain region spans residues 392–523; sequence KLQQLVVHSD…QQEKQVLGGV (132 aa).

The protein belongs to the alpha-IPM synthase/homocitrate synthase family. LeuA type 1 subfamily. In terms of assembly, homodimer. The cofactor is Mn(2+).

It is found in the cytoplasm. The enzyme catalyses 3-methyl-2-oxobutanoate + acetyl-CoA + H2O = (2S)-2-isopropylmalate + CoA + H(+). It functions in the pathway amino-acid biosynthesis; L-leucine biosynthesis; L-leucine from 3-methyl-2-oxobutanoate: step 1/4. In terms of biological role, catalyzes the condensation of the acetyl group of acetyl-CoA with 3-methyl-2-oxobutanoate (2-ketoisovalerate) to form 3-carboxy-3-hydroxy-4-methylpentanoate (2-isopropylmalate). This is 2-isopropylmalate synthase from Shewanella piezotolerans (strain WP3 / JCM 13877).